The following is a 167-amino-acid chain: Photosystem I assembly protein Ycf3 (167 aa).

3 TPR repeats span residues 35–68 (AFAY…EVDA), 72–105 (SYIL…NPSL), and 120–153 (GEQA…APTN).

The protein belongs to the Ycf3 family.

The protein resides in the plastid. It is found in the chloroplast thylakoid membrane. Its function is as follows. Essential for the assembly of the photosystem I (PSI) complex. May act as a chaperone-like factor to guide the assembly of the PSI subunits. The chain is Photosystem I assembly protein Ycf3 from Stigeoclonium helveticum (Green alga).